A 400-amino-acid chain; its full sequence is Enoyl-[acyl-carrier-protein] reductase [NADH] (400 aa).

Residues 48–53 (GASTGY), 74–75 (FE), 111–112 (DA), and 139–140 (LA) contribute to the NAD(+) site. Tyr225 is a binding site for substrate. The Proton donor role is filled by Tyr235. NAD(+) contacts are provided by residues Lys244 and 273–275 (VVT).

The protein belongs to the TER reductase family. Monomer.

It catalyses the reaction a 2,3-saturated acyl-[ACP] + NAD(+) = a (2E)-enoyl-[ACP] + NADH + H(+). It functions in the pathway lipid metabolism; fatty acid biosynthesis. Its function is as follows. Involved in the final reduction of the elongation cycle of fatty acid synthesis (FAS II). Catalyzes the reduction of a carbon-carbon double bond in an enoyl moiety that is covalently linked to an acyl carrier protein (ACP). In Burkholderia lata (strain ATCC 17760 / DSM 23089 / LMG 22485 / NCIMB 9086 / R18194 / 383), this protein is Enoyl-[acyl-carrier-protein] reductase [NADH].